The sequence spans 391 residues: S-adenosylmethionine synthase (391 aa).

His-14 serves as a coordination point for ATP. Position 16 (Asp-16) interacts with Mg(2+). Glu-42 serves as a coordination point for K(+). L-methionine-binding residues include Glu-55 and Gln-98. The tract at residues 98-108 (QSVDIAMGVDE) is flexible loop. ATP contacts are provided by residues 172 to 174 (DGK), 238 to 239 (RF), Asp-247, 253 to 254 (RK), Ala-270, and Lys-274. L-methionine is bound at residue Asp-247. Residue Lys-278 coordinates L-methionine.

It belongs to the AdoMet synthase family. Homotetramer; dimer of dimers. Mg(2+) is required as a cofactor. It depends on K(+) as a cofactor.

It localises to the cytoplasm. It carries out the reaction L-methionine + ATP + H2O = S-adenosyl-L-methionine + phosphate + diphosphate. It participates in amino-acid biosynthesis; S-adenosyl-L-methionine biosynthesis; S-adenosyl-L-methionine from L-methionine: step 1/1. Functionally, catalyzes the formation of S-adenosylmethionine (AdoMet) from methionine and ATP. The overall synthetic reaction is composed of two sequential steps, AdoMet formation and the subsequent tripolyphosphate hydrolysis which occurs prior to release of AdoMet from the enzyme. The sequence is that of S-adenosylmethionine synthase from Clostridium botulinum (strain Kyoto / Type A2).